Reading from the N-terminus, the 544-residue chain is O-phosphoserine--tRNA(Cys) ligase (544 aa).

Residues 194–196 (HMT), 239–241 (SAS), 281–282 (YY), and Asn335 each bind substrate.

The protein belongs to the class-II aminoacyl-tRNA synthetase family. O-phosphoseryl-tRNA(Cys) synthetase subfamily. As to quaternary structure, homotetramer. Interacts with SepCysS.

It carries out the reaction tRNA(Cys) + O-phospho-L-serine + ATP = O-phospho-L-seryl-tRNA(Cys) + AMP + diphosphate. Its function is as follows. Catalyzes the attachment of O-phosphoserine (Sep) to tRNA(Cys). This Methanopyrus kandleri (strain AV19 / DSM 6324 / JCM 9639 / NBRC 100938) protein is O-phosphoserine--tRNA(Cys) ligase.